A 233-amino-acid polypeptide reads, in one-letter code: Homeobox protein ceh-30 (233 aa).

Positions 50 to 85 (NNSTYSHDLDPSPQSVRSDLSTSPRASSPDRNSPMS) are enriched in polar residues. 2 disordered regions span residues 50–93 (NNST…KART) and 206–233 (FQAT…SNSD). Positions 88–147 (SRKARTIFTDKQLQELENTFEKQKYLSVQDRMDLAHRMGLSDTQVKTWYQNRRTKWKRQA) form a DNA-binding region, homeobox. The span at 224-233 (PQLDVSSNSD) shows a compositional bias: polar residues.

It localises to the nucleus. Functionally, cell-type specific anti-apoptotic transcription factor required for the sexually dimorphic survival of the male-specific CEM (cephalic male) sensory neurons during sex determination. In hermaphrodites, the homologous cells undergo programmed cell death due to transcriptional repression of ceh-30 by tra-1, the terminal regulator in the sex determination pathway. The polypeptide is Homeobox protein ceh-30 (Caenorhabditis briggsae).